A 287-amino-acid chain; its full sequence is Eukaryotic translation initiation factor 3 subunit F (287 aa).

Residues 12 to 142 (VRVHPVVLFQ…IKAYVCVSLG (131 aa)) form the MPN domain.

Belongs to the eIF-3 subunit F family. Component of the eukaryotic translation initiation factor 3 (eIF-3) complex.

Its subcellular location is the cytoplasm. Its function is as follows. Component of the eukaryotic translation initiation factor 3 (eIF-3) complex, which is involved in protein synthesis of a specialized repertoire of mRNAs and, together with other initiation factors, stimulates binding of mRNA and methionyl-tRNAi to the 40S ribosome. The eIF-3 complex specifically targets and initiates translation of a subset of mRNAs involved in cell proliferation. This Culex quinquefasciatus (Southern house mosquito) protein is Eukaryotic translation initiation factor 3 subunit F.